A 127-amino-acid chain; its full sequence is Large ribosomal subunit protein bL17 (127 aa).

Belongs to the bacterial ribosomal protein bL17 family. Part of the 50S ribosomal subunit. Contacts protein L32.

This chain is Large ribosomal subunit protein bL17, found in Xanthomonas oryzae pv. oryzae (strain KACC10331 / KXO85).